The chain runs to 413 residues: Succinate--CoA ligase [ADP-forming] subunit beta, mitochondrial (413 aa).

A mitochondrion-targeting transit peptide spans 1–2 (RR). The ATP-grasp domain occupies 11-238 (MGLLQEAGIS…SNSAYRQKKI (228 aa)). ATP is bound by residues Lys-48 and 55–57 (GRG). Residues Asn-208 and Asp-222 each contribute to the Mg(2+) site. Substrate-binding positions include Asn-273 and 330 to 332 (GIM).

It belongs to the succinate/malate CoA ligase beta subunit family. ATP-specific subunit beta subfamily. As to quaternary structure, heterodimer of an alpha and a beta subunit. The beta subunit determines specificity for ATP. The cofactor is Mg(2+). In terms of tissue distribution, widely expressed. Not present in liver.

The protein localises to the mitochondrion. It catalyses the reaction succinate + ATP + CoA = succinyl-CoA + ADP + phosphate. The protein operates within carbohydrate metabolism; tricarboxylic acid cycle; succinate from succinyl-CoA (ligase route): step 1/1. In terms of biological role, ATP-specific succinyl-CoA synthetase functions in the citric acid cycle (TCA), coupling the hydrolysis of succinyl-CoA to the synthesis of ATP and thus represents the only step of substrate-level phosphorylation in the TCA. The beta subunit provides nucleotide specificity of the enzyme and binds the substrate succinate, while the binding sites for coenzyme A and phosphate are found in the alpha subunit. This Columba livia (Rock dove) protein is Succinate--CoA ligase [ADP-forming] subunit beta, mitochondrial.